The sequence spans 526 residues: Probable di/tripeptide-binding protein 5 (526 aa).

The signal sequence occupies residues 1–21 (MRLAAFSLFLAPLLLAQPAAA).

This sequence belongs to the bacterial solute-binding protein 5 family. In terms of assembly, the complex is composed of two ATP-binding proteins (DppD and DppF), two transmembrane proteins (DppB and DppC) and a solute-binding protein (DppA5). Five orthologous SBPs (DppA1-A5) are present in P.aeruginosa, which increases the substrate specificity of the DppBCDF transporter.

Functionally, part of the ABC transporter DppABCDF involved in the uptake of various di/tripeptides. In Pseudomonas aeruginosa (strain UCBPP-PA14), this protein is Probable di/tripeptide-binding protein 5.